The primary structure comprises 84 residues: uncharacterized protein (84 aa).

This is an uncharacterized protein from Methanocaldococcus jannaschii (strain ATCC 43067 / DSM 2661 / JAL-1 / JCM 10045 / NBRC 100440) (Methanococcus jannaschii).